The sequence spans 427 residues: Glutamate-1-semialdehyde 2,1-aminomutase (427 aa).

Residue lysine 267 is modified to N6-(pyridoxal phosphate)lysine.

The protein belongs to the class-III pyridoxal-phosphate-dependent aminotransferase family. HemL subfamily. Homodimer. Pyridoxal 5'-phosphate is required as a cofactor.

It is found in the cytoplasm. The enzyme catalyses (S)-4-amino-5-oxopentanoate = 5-aminolevulinate. Its pathway is porphyrin-containing compound metabolism; protoporphyrin-IX biosynthesis; 5-aminolevulinate from L-glutamyl-tRNA(Glu): step 2/2. The polypeptide is Glutamate-1-semialdehyde 2,1-aminomutase (Sulfurihydrogenibium azorense (strain DSM 15241 / OCM 825 / Az-Fu1)).